The primary structure comprises 312 residues: MPVIPVDKPLGLTSHDVVNRARRARGTRRVGHTGTLDPLATGVLVLCVDDSTKLVQFMEADSKEYLAWIALGGTSPTLDAEGPLTEVVPVSPPSEEEARAVLAGFVGPQAQVPPQYSAIQVGGQRAYAVARAGGALDLPARNIVIHALELLGISNRMAESPRTFARSSEGWTPDPTGRTFTLPEPLGEFPTLLVRASVSSGTYLRSLARDVGAALGVPAHLAGLVRTRVGRYDLADSVSVEDLAGAEGFPNLAALDLPRMEADEPLARALRQGKRPRSAVVGRHVVTRDGELVAVVDGDGKELRVVRAWAGA.

Catalysis depends on aspartate 37, which acts as the Nucleophile.

It belongs to the pseudouridine synthase TruB family. Type 1 subfamily.

It catalyses the reaction uridine(55) in tRNA = pseudouridine(55) in tRNA. Functionally, responsible for synthesis of pseudouridine from uracil-55 in the psi GC loop of transfer RNAs. In Deinococcus geothermalis (strain DSM 11300 / CIP 105573 / AG-3a), this protein is tRNA pseudouridine synthase B.